The following is a 215-amino-acid chain: Pyrrolidone-carboxylate peptidase (215 aa).

Active-site residues include glutamate 80, cysteine 143, and histidine 167.

The protein belongs to the peptidase C15 family. In terms of assembly, homotetramer.

It localises to the cytoplasm. It carries out the reaction Release of an N-terminal pyroglutamyl group from a polypeptide, the second amino acid generally not being Pro.. Removes 5-oxoproline from various penultimate amino acid residues except L-proline. The chain is Pyrrolidone-carboxylate peptidase from Bacillus cereus (strain 03BB102).